Here is a 134-residue protein sequence, read N- to C-terminus: Retinol-binding protein 2 (134 aa).

All-trans-retinol contacts are provided by Lys-41 and Gln-109.

This sequence belongs to the calycin superfamily. Fatty-acid binding protein (FABP) family.

It is found in the cytoplasm. In terms of biological role, intracellular transport of retinol. This Rattus norvegicus (Rat) protein is Retinol-binding protein 2 (Rbp2).